Reading from the N-terminus, the 382-residue chain is Anhydro-N-acetylmuramic acid kinase (382 aa).

Position 9–16 (9–16) interacts with ATP; it reads GTSLDGID.

This sequence belongs to the anhydro-N-acetylmuramic acid kinase family.

The catalysed reaction is 1,6-anhydro-N-acetyl-beta-muramate + ATP + H2O = N-acetyl-D-muramate 6-phosphate + ADP + H(+). Its pathway is amino-sugar metabolism; 1,6-anhydro-N-acetylmuramate degradation. It functions in the pathway cell wall biogenesis; peptidoglycan recycling. Functionally, catalyzes the specific phosphorylation of 1,6-anhydro-N-acetylmuramic acid (anhMurNAc) with the simultaneous cleavage of the 1,6-anhydro ring, generating MurNAc-6-P. Is required for the utilization of anhMurNAc either imported from the medium or derived from its own cell wall murein, and thus plays a role in cell wall recycling. This Bacillus anthracis (strain A0248) protein is Anhydro-N-acetylmuramic acid kinase.